A 600-amino-acid chain; its full sequence is Methionine--tRNA ligase (600 aa).

The 'HIGH' region motif lies at Pro12–His22. Cys144, Cys147, Cys157, and Cys160 together coordinate Zn(2+). The 'KMSKS' region signature appears at Lys351 to Ser355. Ser354 is a binding site for ATP.

It belongs to the class-I aminoacyl-tRNA synthetase family. MetG type 1 subfamily. In terms of assembly, monomer. It depends on Zn(2+) as a cofactor.

The protein resides in the cytoplasm. The enzyme catalyses tRNA(Met) + L-methionine + ATP = L-methionyl-tRNA(Met) + AMP + diphosphate. Functionally, is required not only for elongation of protein synthesis but also for the initiation of all mRNA translation through initiator tRNA(fMet) aminoacylation. The protein is Methionine--tRNA ligase of Chloroflexus aggregans (strain MD-66 / DSM 9485).